Here is a 184-residue protein sequence, read N- to C-terminus: Peptide deformylase (184 aa).

C111 and H154 together coordinate Fe cation. Residue E155 is part of the active site. Residue H158 participates in Fe cation binding.

This sequence belongs to the polypeptide deformylase family. Fe(2+) serves as cofactor.

It catalyses the reaction N-terminal N-formyl-L-methionyl-[peptide] + H2O = N-terminal L-methionyl-[peptide] + formate. Removes the formyl group from the N-terminal Met of newly synthesized proteins. Requires at least a dipeptide for an efficient rate of reaction. N-terminal L-methionine is a prerequisite for activity but the enzyme has broad specificity at other positions. The sequence is that of Peptide deformylase from Macrococcus caseolyticus (strain JCSC5402) (Macrococcoides caseolyticum).